The primary structure comprises 86 residues: Weak neurotoxin 8 (86 aa).

The N-terminal stretch at 1–21 (MKTLLLTLVVVTIVCLDLGYT) is a signal peptide. Intrachain disulfides connect Cys24/Cys45, Cys27/Cys32, Cys38/Cys63, Cys67/Cys78, and Cys79/Cys84.

This sequence belongs to the three-finger toxin family. Ancestral subfamily. Orphan group II sub-subfamily. As to expression, expressed by the venom gland.

It localises to the secreted. In terms of biological role, binds with low affinity to muscular (alpha-1-beta-1-delta-epsilon/CHRNA1-CHRNB1-CHRND-CHRNE) and very low affinity to neuronal (alpha-7/CHRNA7) nicotinic acetylcholine receptor (nAChR). The protein is Weak neurotoxin 8 of Naja sputatrix (Malayan spitting cobra).